The sequence spans 535 residues: Alpha-1,3-mannosyl-glycoprotein 4-beta-N-acetylglucosaminyltransferase A (535 aa).

The Cytoplasmic portion of the chain corresponds to 1–4 (MRLR). The chain crosses the membrane as a helical; Signal-anchor for type II membrane protein span at residues 5-27 (NGTVATALAFITSFLTLSWYTTW). Positions 28 to 63 (QNGKEKLIAYQREFLALKERLRIAEHRISQRSSELN) form a coiled coil. Residues 28–535 (QNGKEKLIAY…NEIHIKKATN (508 aa)) are Lumenal-facing. 2 N-linked (GlcNAc...) asparagine glycosylation sites follow: Asn77 and Asn458. Phosphoserine is present on Ser474.

This sequence belongs to the glycosyltransferase 54 family. It depends on a divalent metal cation as a cofactor. Post-translationally, N-glycosylated.

It localises to the golgi apparatus membrane. The protein resides in the secreted. The enzyme catalyses N(4)-{beta-D-GlcNAc-(1-&gt;2)-alpha-D-Man-(1-&gt;3)-[beta-D-GlcNAc-(1-&gt;2)-alpha-D-Man-(1-&gt;6)]-beta-D-Man-(1-&gt;4)-beta-D-GlcNAc-(1-&gt;4)-beta-D-GlcNAc}-L-asparaginyl-[protein] + UDP-N-acetyl-alpha-D-glucosamine = N(4)-{beta-D-GlcNAc-(1-&gt;2)-[beta-D-GlcNAc-(1-&gt;4)]-alpha-D-Man-(1-&gt;3)-[beta-D-GlcNAc-(1-&gt;2)-alpha-D-Man-(1-&gt;6)]-beta-D-Man-(1-&gt;4)-beta-D-GlcNAc-(1-&gt;4)-beta-D-GlcNAc}-L-asparaginyl-[protein] + UDP + H(+). It carries out the reaction an N(4)-{beta-D-GlcNAc-(1-&gt;2)-alpha-D-Man-(1-&gt;3)-[alpha-D-Man-(1-&gt;6)]-beta-D-Man-(1-&gt;4)-beta-D-GlcNAc-(1-&gt;4)-beta-D-GlcNAc}-L-asparaginyl-[protein] + UDP-N-acetyl-alpha-D-glucosamine = an N(4)-{beta-D-GlcNAc-(1-&gt;2)-[beta-D-GlcNAc-(1-&gt;4)]-alpha-D-Man-(1-&gt;3)-[alpha-D-Man-(1-&gt;6)]-beta-D-Man-(1-&gt;4)-beta-D-GlcNAc-(1-&gt;4)-beta-D-GlcNAc}-L-asparaginyl-[protein] + UDP + H(+). It catalyses the reaction an N(4)-{beta-D-GlcNAc-(1-&gt;2)-alpha-D-Man-(1-&gt;3)-[beta-D-GlcNAc-(1-&gt;2)-[beta-D-GlcNAc-(1-&gt;6)]-alpha-D-Man-(1-&gt;6)]-beta-D-Man-(1-&gt;4)-beta-D-GlcNAc-(1-&gt;4)-beta-D-GlcNAc}-L-asparaginyl-[protein] + UDP-N-acetyl-alpha-D-glucosamine = an N(4)-{beta-D-GlcNAc-(1-&gt;2)-[beta-D-GlcNAc-(1-&gt;4)]-alpha-D-Man-(1-&gt;3)-[beta-D-GlcNAc-(1-&gt;2)-[beta-D-GlcNAc-(1-&gt;6)]-alpha-D-Man-(1-&gt;6)]-beta-D-Man-(1-&gt;4)-beta-D-GlcNAc-(1-&gt;4)-beta-D-GlcNAc}-L-asparaginyl-[protein] + UDP + H(+). The catalysed reaction is an N(4)-{beta-D-GlcNAc-(1-&gt;2)-alpha-D-Man-(1-&gt;3)-[beta-D-GlcNAc-(1-&gt;2)-alpha-D-Man-(1-&gt;6)]-beta-D-Man-(1-&gt;4)-beta-D-GlcNAc-(1-&gt;4)-[alpha-L-Fuc-(1-&gt;6)]-beta-D-GlcNAc}-L-asparaginyl-[protein] + UDP-N-acetyl-alpha-D-glucosamine = N(4)-{beta-D-GlcNAc-(1-&gt;2)-[beta-D-GlcNAc-(1-&gt;4)]-alpha-D-Man-(1-&gt;3)-[beta-D-GlcNAc-(1-&gt;2)-alpha-D-Man-(1-&gt;6)]-beta-D-Man-(1-&gt;4)-beta-D-GlcNAc-(1-&gt;4)-[alpha-L-Fuc-(1-&gt;6)]-beta-D-GlcNAc}-asparaginyl-[protein] + UDP + H(+). The enzyme catalyses an N(4)-{beta-D-GlcNAc-(1-&gt;2)-alpha-D-Man-(1-&gt;3)-[beta-D-Gal-(1-&gt;4)-beta-D-GlcNAc-(1-&gt;2)-alpha-D-Man-(1-&gt;6)]-beta-D-Man-(1-&gt;4)-beta-D-GlcNAc-(1-&gt;4)-beta-D-GlcNAc}-L-asparaginyl-[protein] + UDP-N-acetyl-alpha-D-glucosamine = an N(4)-{beta-D-GlcNAc-(1-&gt;2)-[beta-D-GlcNAc-(1-&gt;4)]-alpha-D-Man-(1-&gt;3)-[beta-D-Gal-(1-&gt;4)-beta-D-GlcNAc-(1-&gt;2)-alpha-D-Man-(1-&gt;6)]-beta-D-Man-(1-&gt;4)-beta-D-GlcNAc-(1-&gt;4)-beta-D-GlcNAc}-L-asparaginyl-[protein] + UDP + H(+). It carries out the reaction N(4)-{beta-D-GlcNAc-(1-&gt;2)-alpha-D-Man-(1-&gt;3)-[alpha-D-Man-(1-&gt;3)-{alpha-D-Man-(1-&gt;6)}-alpha-D-Man-(1-&gt;6)]-beta-D-Man-(1-&gt;4)-beta-D-GlcNAc-(1-&gt;4)-beta-D-GlcNAc}-asparaginyl-[protein] + UDP-N-acetyl-alpha-D-glucosamine = N(4)-{beta-D-GlcNAc-(1-&gt;2)-[beta-D-GlcNAc-(1-&gt;4)]-alpha-D-Man-(1-&gt;3)-[alpha-D-Man-(1-&gt;3)-{alpha-D-Man-(1-&gt;6)}-alpha-D-Man-(1-&gt;6)]-beta-D-Man-(1-&gt;4)-beta-D-GlcNAc-(1-&gt;4)-beta-D-GlcNAc}-asparaginyl-[protein] + UDP + H(+). It catalyses the reaction N(4)-{beta-D-GlcNAc-(1-&gt;2)-alpha-D-Man-(1-&gt;3)-beta-D-Man-(1-&gt;4)-beta-D-GlcNAc-(1-&gt;4)-beta-D-GlcNAc}-asparaginyl-[protein] + UDP-N-acetyl-alpha-D-glucosamine = N(4)-{beta-D-GlcNAc-(1-&gt;2)-[beta-D-GlcNAc-(1-&gt;4)]-alpha-D-Man-(1-&gt;3)-beta-D-Man-(1-&gt;4)-beta-D-GlcNAc-(1-&gt;4)-beta-D-GlcNAc}-asparaginyl-[protein] + UDP + H(+). It functions in the pathway protein modification; protein glycosylation. Its activity is regulated as follows. Inhibited by UDP. Functionally, glycosyltransferase that catalyze the transfer of GlcNAc from UDP-GlcNAc to the GlcNAcbeta1-2Manalpha1-3 arm of the core structure of N-linked glycans through a beta1-4 linkage and participates in the production of tri- and tetra-antennary N-linked sugar chains. Involved in glucose transport by mediating SLC2A2/GLUT2 glycosylation, thereby controlling cell-surface expression of SLC2A2 in pancreatic beta cells. The chain is Alpha-1,3-mannosyl-glycoprotein 4-beta-N-acetylglucosaminyltransferase A from Pongo abelii (Sumatran orangutan).